Reading from the N-terminus, the 89-residue chain is Small ribosomal subunit protein uS15 (89 aa).

Belongs to the universal ribosomal protein uS15 family. In terms of assembly, part of the 30S ribosomal subunit. Forms a bridge to the 50S subunit in the 70S ribosome, contacting the 23S rRNA.

Functionally, one of the primary rRNA binding proteins, it binds directly to 16S rRNA where it helps nucleate assembly of the platform of the 30S subunit by binding and bridging several RNA helices of the 16S rRNA. In terms of biological role, forms an intersubunit bridge (bridge B4) with the 23S rRNA of the 50S subunit in the ribosome. This is Small ribosomal subunit protein uS15 from Shewanella baltica (strain OS223).